The sequence spans 262 residues: GTP cyclohydrolase 1 type 2 homolog (262 aa).

Positions 65, 102, 222, and 225 each coordinate a divalent metal cation.

It belongs to the GTP cyclohydrolase I type 2/NIF3 family. As to quaternary structure, homohexamer.

The polypeptide is GTP cyclohydrolase 1 type 2 homolog (Streptococcus pyogenes serotype M3 (strain ATCC BAA-595 / MGAS315)).